Consider the following 520-residue polypeptide: GMP synthase [glutamine-hydrolyzing] (520 aa).

Residues 12–205 (KIIVLDYGSQ…AISICGARGD (194 aa)) enclose the Glutamine amidotransferase type-1 domain. Residue cysteine 89 is the Nucleophile of the active site. Catalysis depends on residues histidine 179 and glutamate 181. Positions 206–395 (WSMDNFIDME…LGMPEEIVWR (190 aa)) constitute a GMPS ATP-PPase domain. An ATP-binding site is contributed by 233 to 239 (SGGVDSS).

As to quaternary structure, homodimer.

It carries out the reaction XMP + L-glutamine + ATP + H2O = GMP + L-glutamate + AMP + diphosphate + 2 H(+). The protein operates within purine metabolism; GMP biosynthesis; GMP from XMP (L-Gln route): step 1/1. Functionally, catalyzes the synthesis of GMP from XMP. The polypeptide is GMP synthase [glutamine-hydrolyzing] (Streptococcus pyogenes serotype M2 (strain MGAS10270)).